A 430-amino-acid polypeptide reads, in one-letter code: Enolase (430 aa).

Q163 is a (2R)-2-phosphoglycerate binding site. The active-site Proton donor is the E205. Mg(2+) contacts are provided by D242, E285, and D312. (2R)-2-phosphoglycerate is bound by residues K337, R366, S367, and K388. K337 serves as the catalytic Proton acceptor.

It belongs to the enolase family. Mg(2+) serves as cofactor.

It is found in the cytoplasm. The protein resides in the secreted. It localises to the cell surface. The enzyme catalyses (2R)-2-phosphoglycerate = phosphoenolpyruvate + H2O. It functions in the pathway carbohydrate degradation; glycolysis; pyruvate from D-glyceraldehyde 3-phosphate: step 4/5. Its function is as follows. Catalyzes the reversible conversion of 2-phosphoglycerate (2-PG) into phosphoenolpyruvate (PEP). It is essential for the degradation of carbohydrates via glycolysis. This chain is Enolase, found in Maridesulfovibrio salexigens (strain ATCC 14822 / DSM 2638 / NCIMB 8403 / VKM B-1763) (Desulfovibrio salexigens).